The primary structure comprises 399 residues: Glutathione-independent formaldehyde dehydrogenase (399 aa).

A Zn(2+)-binding site is contributed by Cys-47. Gly-48, Ser-49, and His-52 together coordinate NAD(+). Zn(2+)-binding residues include His-68, Cys-98, Cys-101, Cys-104, Cys-112, and Asp-170. Residues Val-198, Asp-218, Arg-223, Val-263, Arg-268, Pro-300, Gln-338, and Thr-339 each contribute to the NAD(+) site.

It belongs to the zinc-containing alcohol dehydrogenase family. Homotetramer. Zn(2+) serves as cofactor.

The enzyme catalyses formaldehyde + NAD(+) + H2O = formate + NADH + 2 H(+). It catalyses the reaction acetaldehyde + NAD(+) + H2O = acetate + NADH + 2 H(+). Functionally, dehydrogenase that catalyzes the NAD(+)-dependent oxidation of formaldehyde and acetaldehyde. Shows no detectable activity against either aldehydes with longer carbon chains or ethanol. This Pseudomonas aeruginosa (strain LESB58) protein is Glutathione-independent formaldehyde dehydrogenase.